We begin with the raw amino-acid sequence, 255 residues long: Small ribosomal subunit protein uS2 (255 aa).

The disordered stretch occupies residues 232–255 (ASGRDLGASEEVPVEPALEEASEA).

This sequence belongs to the universal ribosomal protein uS2 family.

This Sinorhizobium medicae (strain WSM419) (Ensifer medicae) protein is Small ribosomal subunit protein uS2.